The following is an 88-amino-acid chain: MLKASILFITISLTLMLENSYGKSCRSIGEKCSKTVFDRCCGDSICHLTSPFHGKCVKCLKEGQLCTSDKNCCSDKCNWGKCTKEKHY.

The N-terminal stretch at 1–22 (MLKASILFITISLTLMLENSYG) is a signal peptide. Disulfide bonds link cysteine 59–cysteine 73, cysteine 66–cysteine 77, and cysteine 72–cysteine 82.

The protein resides in the secreted. This is an uncharacterized protein from Schistosoma japonicum (Blood fluke).